The chain runs to 83 residues: Small ribosomal subunit protein uS17 (83 aa).

It belongs to the universal ribosomal protein uS17 family. In terms of assembly, part of the 30S ribosomal subunit.

In terms of biological role, one of the primary rRNA binding proteins, it binds specifically to the 5'-end of 16S ribosomal RNA. This Nitratiruptor sp. (strain SB155-2) protein is Small ribosomal subunit protein uS17.